The sequence spans 103 residues: ATP-dependent Clp protease adapter protein ClpS 2 (103 aa).

This sequence belongs to the ClpS family. As to quaternary structure, binds to the N-terminal domain of the chaperone ClpA.

Its function is as follows. Involved in the modulation of the specificity of the ClpAP-mediated ATP-dependent protein degradation. The sequence is that of ATP-dependent Clp protease adapter protein ClpS 2 from Agrobacterium fabrum (strain C58 / ATCC 33970) (Agrobacterium tumefaciens (strain C58)).